We begin with the raw amino-acid sequence, 1788 residues long: MSSLASQLAQIAANSRSTLNTKVLKAAHSKSLIFEPRVAATQTYPEIYSICLEGFEELCNLDSRFTKFTQSLWSPQSQEADRTQMSAAENAALDKHVEAFLHLCGSRLRLMPTIKAIEWLIRRFRVHEFNTAALIATFLPYHTIPAFVTLLSILPANIPKEYRFLDPYIRSLTAPPRAAIVQQATNRPELLTAISQYTLDSCKYQMEYPGLISFWGGVMVEATNGLLDKYRSGRRSIQIENDNALMQQLGPVLSDAMVMKSSPGLQIASYMVVTILAAKGGLADNALTAFMDQLVHGWTPETMRPGLVTLCIISQHRSAKQLSARVTKALLKVPEVASVMNEIGKDHRVDKLANGLALALVDRLHKKGDVRSLPVVNSLLLGNVLREKQIKVVYKSLLVAAHRINDQVDQDGAIRKELGTVLVSLSQAGGEVGDIVRATIDEVDFDIDALELTLGASIRPKLAVEDAPEAAAEDNNTPKVDKEAQVAQNFEKLSKLKPQTASCFAEEPLDLLEELYSLFLSVAANESNLQKFDEAPVLSRPQAPTKLFYASFYMRLWCGSLPTLAKVAALDRVKNLLKDEEFATLDFQAVVPYAIVALSDPAKKVRRAAAELVTVLGSFYETKPSKARRVWGSEGLYAKNAAVNWLDFDATKSLIHSVLIPSLEESILHEDHILAALTNALESSKSKDGDKKHLSHSTRFAIFKFLSSHVVGTPLIAVKLRLLQSLNQIKSISGTSRTDLLLSLLQWWARLSEAEAQQLLAREAVDEASVNNAFVDVVIANNEAGLRLIFELIRDSNVITRNGLVQSLFSRVQKIWSSMKAETQFSTARALLTLSQAVHPTSSEPDVIATEATDVLHKVELTTDILLDFLESLYDDIKKATEKPATKRRRVGSSEKSVDSQSPADVSASLSKATFVLELVQESEPAKHPELLPSLFTTLSELQHLRTVVGSELGYLQSLVLSSLLAMMPAYKDSKELTIDPAAGHGDILASCIQRSSSPTVINAALLLVASLARTAPDVVLHSVMPIFTFMGSSVLKQADDYSAHVVNQTVKEVIPPLIETFRKSRRNLVASTAELLTSFVVAYEHIPSHRKQDLFITLIENLGPEDFLFAVLAMFVDKYGATDNMLAFTTQIIGSFSVEIQLQTLIKHLDLISDIFKPKPVLSAALLAKVDSNSEQDVVKLATKQLTLLPKLLVNRRLRHEISGLAEKDDMESVKIRELYAQLLEGVLTLAGTVKPKKDTLYTRCAEALSNLLNLLSIAEFIKSVEALLDRPNVILRQKVLRALERRVDSESINNPKSREALLAFLPQLTAVIRESDDMNYKHTAVNCVDKIAEKYGKKDLDAVAAAAATIAGDSCLGQPSQELRVMALLCLASLVDVLQDAIVPVLPIAIPKALGCLEESIKAEKPDGALHNAAYAFMAALAQHIPYMISGAYLDRLLVCSNASAAAGLNEECRDSRTDCLQFVAKLIEGKVLFTALEKNWANAASSGYLALEEYLHVLGTALDKHPKSSIAKNTTLFTGIFLNAFDLRRSGVLSSTQELEKIELLINETSLKMIYKLNDAAFRPMFSHLMEWSTTGLPKSDLAGKAQRQVSTYGFLQHFFENLKSIVTSYASYIIDSAVKILSAPLTSDDVLKTLRSRVLRTLTKCFEHDQDGFWQAPAHFNAVAPVLVAQFGHAAGADNCTNDLVLAVVELAAAADSKEHHKEINSALLKHLRSEQAAVRLAVIKCEQELTARLGEEWLQSLPEMLPFISELQDDDDEVVERENRRWIVGIEETLGESLDNMLQ.

The HEAT 1 repeat unit spans residues 585–622 (LDFQAVVPYAIVALSDPAKKVRRAAAELVTVLGSFYET). The tract at residues 884–905 (PATKRRRVGSSEKSVDSQSPAD) is disordered. HEAT repeat units follow at residues 926–962 (AKHP…LVLS), 1049–1086 (QTVK…AYEH), 1257–1294 (LSIA…SESI), 1301–1339 (EALL…KYGK), 1703–1740 (EHHK…RLGE), and 1744–1781 (QSLP…TLGE).

This sequence belongs to the HEATR1/UTP10 family. Component of the ribosomal small subunit (SSU) processome.

It localises to the nucleus. The protein resides in the nucleolus. Involved in nucleolar processing of pre-18S ribosomal RNA. Involved in ribosome biosynthesis. This Neurospora crassa (strain ATCC 24698 / 74-OR23-1A / CBS 708.71 / DSM 1257 / FGSC 987) protein is U3 small nucleolar RNA-associated protein 10 (rbg-5).